The primary structure comprises 856 residues: Dual specificity protein kinase TTK (856 aa).

N-acetylmethionine is present on M1. A Phosphothreonine modification is found at T32. Phosphoserine occurs at positions 36, 277, and 342. A Phosphothreonine modification is found at T380. S383, S435, and S454 each carry phosphoserine. The Protein kinase domain occupies Y524–V790. Residues I530–V538 and K552 contribute to the ATP site. Residue D646 is the Proton acceptor of the active site. Residue S820 is modified to Phosphoserine. A disordered region spans residues C837–K856.

Belongs to the protein kinase superfamily. Ser/Thr protein kinase family. In terms of assembly, interacts with TPR; the interactions occurs in a microtubule-independent manner. Interacts with MAD1L1 and MAD2L1. In terms of processing, autophosphorylated. Present in rapidly proliferating cell lines; high levels in testis, bone marrow, spleen and thymus. Low levels in brain, heart, lung and kidney.

It carries out the reaction L-seryl-[protein] + ATP = O-phospho-L-seryl-[protein] + ADP + H(+). The enzyme catalyses L-threonyl-[protein] + ATP = O-phospho-L-threonyl-[protein] + ADP + H(+). The catalysed reaction is L-tyrosyl-[protein] + ATP = O-phospho-L-tyrosyl-[protein] + ADP + H(+). Inhibited by the ATP-competitive kinase inhibitor, SP600125. In terms of biological role, involved in mitotic spindle assembly checkpoint signaling, a process that delays anaphase until chromosomes are bioriented on the spindle, and in the repair of incorrect mitotic kinetochore-spindle microtubule attachments. Phosphorylates MAD1L1 to promote the mitotic spindle assembly checkpoint. Phosphorylates CDCA8/Borealin leading to enhanced AURKB activity at the kinetochore. Phosphorylates SKA3 at 'Ser-34' leading to dissociation of the SKA complex from microtubules and destabilization of microtubule-kinetochore attachments. Phosphorylates KNL1, KNTC1 and autophosphorylates. Phosphorylates MCRS1 which enhances recruitment of KIF2A to the minus end of spindle microtubules and promotes chromosome alignment. The polypeptide is Dual specificity protein kinase TTK (Ttk) (Mus musculus (Mouse)).